Here is a 599-residue protein sequence, read N- to C-terminus: uncharacterized protein (599 aa).

Position 49 to 56 (49 to 56) interacts with ATP; that stretch reads GPPGSGKT. The 184-residue stretch at 416–599 folds into the Macro domain; the sequence is AEVRKELEYK…TKIFEEKFSV (184 aa).

This sequence in the N-terminal section; belongs to the AAA ATPase family. RarA/MGS1/WRNIP1 subfamily.

This is an uncharacterized protein from Thermotoga maritima (strain ATCC 43589 / DSM 3109 / JCM 10099 / NBRC 100826 / MSB8).